Reading from the N-terminus, the 375-residue chain is 23S rRNA (uracil(747)-C(5))-methyltransferase RlmC (375 aa).

[4Fe-4S] cluster is bound by residues C3, C11, C14, and C87. Q212, F241, E262, and N307 together coordinate S-adenosyl-L-methionine. Catalysis depends on C334, which acts as the Nucleophile.

This sequence belongs to the class I-like SAM-binding methyltransferase superfamily. RNA M5U methyltransferase family. RlmC subfamily.

It carries out the reaction uridine(747) in 23S rRNA + S-adenosyl-L-methionine = 5-methyluridine(747) in 23S rRNA + S-adenosyl-L-homocysteine + H(+). Catalyzes the formation of 5-methyl-uridine at position 747 (m5U747) in 23S rRNA. In Salmonella dublin (strain CT_02021853), this protein is 23S rRNA (uracil(747)-C(5))-methyltransferase RlmC.